The following is a 366-amino-acid chain: Probable quinol oxidase subunit 2 (366 aa).

Residues 1 to 19 form the signal peptide; sequence MSKFKSLLLLFGTLILLSG. Residue C20 is the site of N-palmitoyl cysteine attachment. C20 carries S-diacylglycerol cysteine lipidation. Transmembrane regions (helical) follow at residues 38 to 58 and 80 to 100; these read FLILYSIVFMLVICFVVLGMF and AIIETIWFVIPIIIVAALAIP. Residues 330-366 are disordered; it reads EPYNNEFKKDESKNAKEMKKISKDAQDQDNDDHGGGH. Positions 335–366 are enriched in basic and acidic residues; the sequence is EFKKDESKNAKEMKKISKDAQDQDNDDHGGGH.

It belongs to the cytochrome c oxidase subunit 2 family.

It is found in the cell membrane. It catalyses the reaction 2 a quinol + O2 = 2 a quinone + 2 H2O. Its function is as follows. Catalyzes quinol oxidation with the concomitant reduction of oxygen to water. Subunit II transfers the electrons from a quinol to the binuclear center of the catalytic subunit I. The protein is Probable quinol oxidase subunit 2 (qoxA) of Staphylococcus aureus (strain USA300).